A 470-amino-acid polypeptide reads, in one-letter code: Heparan-sulfate 6-O-sulfotransferase 3 (470 aa).

At 1 to 4 (MDER) the chain is on the cytoplasmic side. The chain crosses the membrane as a helical; Signal-anchor for type II membrane protein span at residues 5–27 (FNKWLLTPVLTLLFVVIMYQYVS). At 28–470 (PSCTSSCTNF…EDYNSQVVRW (443 aa)) the chain is on the lumenal side. The segment at 36–121 (NFGEQLRSGE…EAPENGSLPR (86 aa)) is disordered. The span at 88–113 (PEDEDEDPGDPEEEEEEEEEEPDPEA) shows a compositional bias: acidic residues. N-linked (GlcNAc...) asparagine glycans are attached at residues Asn116 and Asn127. 151–159 (HIQKTGGTT) lines the 3'-phosphoadenylyl sulfate pocket. Substrate is bound by residues 181–182 (KK), Arg198, Trp203, and His208. His208 serves as the catalytic Proton acceptor. N-linked (GlcNAc...) asparagine glycosylation is present at Asn230. 3'-phosphoadenylyl sulfate-binding residues include Arg244 and Ser252. His256 and Trp263 together coordinate substrate. 2 N-linked (GlcNAc...) asparagine glycosylation sites follow: Asn323 and Asn328. 376-378 (TQF) is a binding site for 3'-phosphoadenylyl sulfate. An N-linked (GlcNAc...) asparagine glycan is attached at Asn379. 382–383 (RA) contacts 3'-phosphoadenylyl sulfate. Residues 421–453 (TKQLEHQRDRQKRREERRLQREHRAHRWPKEDR) are disordered. Over residues 422–439 (KQLEHQRDRQKRREERRL) the composition is skewed to basic and acidic residues.

This sequence belongs to the sulfotransferase 6 family. As to expression, ubiquitously expressed.

The protein resides in the membrane. The catalysed reaction is alpha-D-glucosaminyl-[heparan sulfate](n) + 3'-phosphoadenylyl sulfate = 6-sulfo-alpha-D-glucosaminyl-[heparan sulfate](n) + adenosine 3',5'-bisphosphate + H(+). 6-O-sulfation enzyme which catalyzes the transfer of sulfate from 3'-phosphoadenosine 5'-phosphosulfate (PAPS) to position 6 of the N-sulfoglucosamine residue (GlcNS) of heparan sulfate. The sequence is that of Heparan-sulfate 6-O-sulfotransferase 3 (Hs6st3) from Mus musculus (Mouse).